Reading from the N-terminus, the 170-residue chain is MSAAPSELHEVFLNPGEFHFGESNTRISTLLGSCVSITLWHPRKRIGGMCHYMLTERKRPPNAALDGRFGSEAFELFLQHVAAAGTRPGEYQAKLFGGANMLTGPTGKQMDIGPRNVALGRQLLAANHIALMVEHVGGSGRRKLHFDVWSGDVWLAFPQGADAEIRNAHG.

It belongs to the CheD family.

It carries out the reaction L-glutaminyl-[protein] + H2O = L-glutamyl-[protein] + NH4(+). Probably deamidates glutamine residues to glutamate on methyl-accepting chemotaxis receptors (MCPs), playing an important role in chemotaxis. The protein is Probable chemoreceptor glutamine deamidase CheD 3 of Dechloromonas aromatica (strain RCB).